A 197-amino-acid chain; its full sequence is Chalcone--flavanone isomerase 2 (197 aa).

Residues Thr-23, Asn-88, and Thr-165 each coordinate substrate.

This sequence belongs to the chalcone isomerase family.

The enzyme catalyses a chalcone = a flavanone.. Its pathway is secondary metabolite biosynthesis; flavonoid biosynthesis. Catalyzes the intramolecular cyclization of bicyclic chalcones into tricyclic (S)-flavanones. Responsible for the isomerization of 4,2',4',6'-tetrahydroxychalcone (also termed chalcone) into naringenin. The chain is Chalcone--flavanone isomerase 2 (CHI2) from Medicago sativa (Alfalfa).